A 498-amino-acid chain; its full sequence is tRNA-guanine(15) transglycosylase (498 aa).

The Nucleophile role is filled by Asp-85. Substrate is bound at residue Asp-120. Zn(2+)-binding residues include Cys-275, Cys-277, and Cys-280.

The protein belongs to the archaeosine tRNA-ribosyltransferase family. Zn(2+) serves as cofactor.

It catalyses the reaction guanosine(15) in tRNA + 7-cyano-7-deazaguanine = 7-cyano-7-carbaguanosine(15) in tRNA + guanine. The protein operates within tRNA modification; archaeosine-tRNA biosynthesis. Its function is as follows. Exchanges the guanine residue with 7-cyano-7-deazaguanine (preQ0) at position 15 in the dihydrouridine loop (D-loop) of archaeal tRNAs. This is tRNA-guanine(15) transglycosylase from Sulfolobus acidocaldarius (strain ATCC 33909 / DSM 639 / JCM 8929 / NBRC 15157 / NCIMB 11770).